We begin with the raw amino-acid sequence, 527 residues long: Aspartokinase (527 aa).

The residue at position 333 (threonine 333) is a Phosphothreonine. Residues 442-527 (LVGKHMKQYI…RLEQLKRLGI (86 aa)) form the ACT domain.

This sequence belongs to the aspartokinase family. In terms of assembly, homohexamer. Interacts with FPR1; the interaction is direct, plays a role in feedback inhibition of aspartokinase by threonine, and inhibited by tacrolimus and sirolimus.

It catalyses the reaction L-aspartate + ATP = 4-phospho-L-aspartate + ADP. It participates in amino-acid biosynthesis; L-methionine biosynthesis via de novo pathway; L-homoserine from L-aspartate: step 1/3. It functions in the pathway amino-acid biosynthesis; L-threonine biosynthesis; L-threonine from L-aspartate: step 1/5. Allosterically inhibited by threonine. Its function is as follows. Phosphorylates aspartate, the first step in the biosynthesis of amino acids that derive from aspartate (the aspartate family of amino acids), including methioinine and threonine, the latter of which is a precursor to isoleucine. This is Aspartokinase (HOM3) from Saccharomyces cerevisiae (strain ATCC 204508 / S288c) (Baker's yeast).